Here is a 352-residue protein sequence, read N- to C-terminus: tRNA N6-adenosine threonylcarbamoyltransferase (352 aa).

Residues His115 and His119 each coordinate Fe cation. Residues 138-142 (LVSGG), Asp171, Gly184, and Asn277 contribute to the substrate site. Asp305 provides a ligand contact to Fe cation.

The protein belongs to the KAE1 / TsaD family. Fe(2+) serves as cofactor.

It localises to the cytoplasm. The catalysed reaction is L-threonylcarbamoyladenylate + adenosine(37) in tRNA = N(6)-L-threonylcarbamoyladenosine(37) in tRNA + AMP + H(+). Functionally, required for the formation of a threonylcarbamoyl group on adenosine at position 37 (t(6)A37) in tRNAs that read codons beginning with adenine. Is involved in the transfer of the threonylcarbamoyl moiety of threonylcarbamoyl-AMP (TC-AMP) to the N6 group of A37, together with TsaE and TsaB. TsaD likely plays a direct catalytic role in this reaction. In Variovorax paradoxus (strain S110), this protein is tRNA N6-adenosine threonylcarbamoyltransferase.